Here is a 403-residue protein sequence, read N- to C-terminus: uncharacterized protein (403 aa).

A compositionally biased stretch (polar residues) spans 55-88; the sequence is LTGSPNPQATPKQENKSNFFSEKQSVRENGNSSA. Positions 55-95 are disordered; that stretch reads LTGSPNPQATPKQENKSNFFSEKQSVRENGNSSAGEKKQKW. At S58 the chain carries Phosphoserine. In terms of domain architecture, J spans 113 to 177; the sequence is QYYEILDLKK…NLRAHYDRTG (65 aa). A helical transmembrane segment spans residues 263 to 283; that stretch reads SIFYQLLPLIVVILFAFLSNF.

It is found in the endoplasmic reticulum membrane. This is an uncharacterized protein from Schizosaccharomyces pombe (strain 972 / ATCC 24843) (Fission yeast).